The following is a 1017-amino-acid chain: Probable DNA ligase (1017 aa).

Residues 1–363 are unknown; it reads MPWDVKFSHG…PACATPLHAP (363 aa). The interval 326–352 is disordered; that stretch reads GIRSSPPQVRAGDATPSSRSSGDAGVA. Residues 364–1017 form a DNA ligase region; the sequence is DSFARFVAAA…GARPPPAASD (654 aa). Residue glutamate 667 participates in ATP binding. The active-site N6-AMP-lysine intermediate is the lysine 669. Residues arginine 674, arginine 689, glutamate 717, arginine 860, and lysine 866 each coordinate ATP.

In the C-terminal section; belongs to the ATP-dependent DNA ligase family. Mg(2+) serves as cofactor.

The catalysed reaction is ATP + (deoxyribonucleotide)n-3'-hydroxyl + 5'-phospho-(deoxyribonucleotide)m = (deoxyribonucleotide)n+m + AMP + diphosphate.. Its function is as follows. DNA ligase that seals nicks in double-stranded DNA during DNA replication, DNA recombination and DNA repair. The protein is Probable DNA ligase (lig) of Opitutus terrae (strain DSM 11246 / JCM 15787 / PB90-1).